Consider the following 560-residue polypeptide: Dihydroxy-acid dehydratase (560 aa).

Cys52 lines the [2Fe-2S] cluster pocket. Asp84 contributes to the Mg(2+) binding site. Cys125 serves as a coordination point for [2Fe-2S] cluster. The Mg(2+) site is built by Asp126 and Lys127. At Lys127 the chain carries N6-carboxylysine. Residue Cys197 participates in [2Fe-2S] cluster binding. Glu449 contacts Mg(2+). Ser475 acts as the Proton acceptor in catalysis.

This sequence belongs to the IlvD/Edd family. In terms of assembly, homodimer. [2Fe-2S] cluster is required as a cofactor. Requires Mg(2+) as cofactor.

It catalyses the reaction (2R)-2,3-dihydroxy-3-methylbutanoate = 3-methyl-2-oxobutanoate + H2O. The catalysed reaction is (2R,3R)-2,3-dihydroxy-3-methylpentanoate = (S)-3-methyl-2-oxopentanoate + H2O. It participates in amino-acid biosynthesis; L-isoleucine biosynthesis; L-isoleucine from 2-oxobutanoate: step 3/4. Its pathway is amino-acid biosynthesis; L-valine biosynthesis; L-valine from pyruvate: step 3/4. Functionally, functions in the biosynthesis of branched-chain amino acids. Catalyzes the dehydration of (2R,3R)-2,3-dihydroxy-3-methylpentanoate (2,3-dihydroxy-3-methylvalerate) into 2-oxo-3-methylpentanoate (2-oxo-3-methylvalerate) and of (2R)-2,3-dihydroxy-3-methylbutanoate (2,3-dihydroxyisovalerate) into 2-oxo-3-methylbutanoate (2-oxoisovalerate), the penultimate precursor to L-isoleucine and L-valine, respectively. The sequence is that of Dihydroxy-acid dehydratase from Sulfurisphaera tokodaii (strain DSM 16993 / JCM 10545 / NBRC 100140 / 7) (Sulfolobus tokodaii).